Reading from the N-terminus, the 392-residue chain is Formate-dependent phosphoribosylglycinamide formyltransferase (392 aa).

N(1)-(5-phospho-beta-D-ribosyl)glycinamide-binding positions include 22–23 and Glu82; that span reads EL. ATP contacts are provided by residues Arg114, Lys155, 160–165, 195–198, and Glu203; these read SSGKGQ and EGEV. Residues 119–308 enclose the ATP-grasp domain; sequence RLAAETLALP…EFALHVRAFL (190 aa). Positions 267 and 279 each coordinate Mg(2+). Residues Asp286, Lys355, and 362–363 each bind N(1)-(5-phospho-beta-D-ribosyl)glycinamide; that span reads RR.

This sequence belongs to the PurK/PurT family. Homodimer.

The catalysed reaction is N(1)-(5-phospho-beta-D-ribosyl)glycinamide + formate + ATP = N(2)-formyl-N(1)-(5-phospho-beta-D-ribosyl)glycinamide + ADP + phosphate + H(+). It functions in the pathway purine metabolism; IMP biosynthesis via de novo pathway; N(2)-formyl-N(1)-(5-phospho-D-ribosyl)glycinamide from N(1)-(5-phospho-D-ribosyl)glycinamide (formate route): step 1/1. In terms of biological role, involved in the de novo purine biosynthesis. Catalyzes the transfer of formate to 5-phospho-ribosyl-glycinamide (GAR), producing 5-phospho-ribosyl-N-formylglycinamide (FGAR). Formate is provided by PurU via hydrolysis of 10-formyl-tetrahydrofolate. This is Formate-dependent phosphoribosylglycinamide formyltransferase from Edwardsiella ictaluri (strain 93-146).